The sequence spans 94 residues: Large ribosomal subunit protein bL28 (94 aa).

The segment at 1-21 is disordered; sequence MARRCEVTGRGTVSGNNVSHS. The span at 11-20 shows a compositional bias: polar residues; the sequence is GTVSGNNVSH.

It belongs to the bacterial ribosomal protein bL28 family.

The protein is Large ribosomal subunit protein bL28 of Leptospira borgpetersenii serovar Hardjo-bovis (strain JB197).